Reading from the N-terminus, the 446-residue chain is D(1A) dopamine receptor (446 aa).

The Extracellular portion of the chain corresponds to 1-22 (MAPNTSTMDEAGLPAERDFSFR). A glycan (N-linked (GlcNAc...) asparagine) is linked at Asn4. A helical membrane pass occupies residues 23 to 48 (ILTACFLSLLILSTLLGNTLVCAAVI). The Cytoplasmic segment spans residues 49 to 59 (RFRHLRSKVTN). A helical membrane pass occupies residues 60–86 (FFVISLAVSDLLVAVLVMPWKAVAEIA). Residues 87–95 (GFWPLGPFC) lie on the Extracellular side of the membrane. An intrachain disulfide couples Cys95 to Cys186. A helical membrane pass occupies residues 96 to 118 (NIWVAFDIMCSTASILNLCVISV). The Cytoplasmic segment spans residues 119–137 (DRYWAISSPFQYERKMTPK). A helical transmembrane segment spans residues 138–162 (AAFILISVAWTLSVLISFIPVQLSW). Topologically, residues 163–192 (HKAKPTWPLDGNFTSLEDTEDDNCDTRLSR) are extracellular. The helical transmembrane segment at 193–218 (TYAISSSLISFYIPVAIMIVTYTSIY) threads the bilayer. Over 219–272 (RIAQKQIRRISALERAAVHAKNCQTTAGNGNPVECAQSESSFKMSFKRETKVLK) the chain is Cytoplasmic. A helical transmembrane segment spans residues 273 to 299 (TLSVIMGVFVCCWLPFFISNCMVPFCG). The Extracellular segment spans residues 300–312 (SEETQPFCIDSIT). The chain crosses the membrane as a helical span at residues 313–337 (FDVFVWFGWANSSLNPIIYAFNADF). Residues 338-446 (QKAFSTLLGC…PVTHSGQHST (109 aa)) lie on the Cytoplasmic side of the membrane. S-palmitoyl cysteine attachment occurs at residues Cys347 and Cys351.

It belongs to the G-protein coupled receptor 1 family. Interacts with DNAJC14 via its C-terminus PubMed:11331877. Interacts with DRD2. Interacts with DORIP1. Post-translationally, N-glycosylated. As to expression, brain, in the striatum, the nucleus accumbens, and the olfactory tubercle.

It is found in the cell membrane. The protein localises to the endoplasmic reticulum membrane. It localises to the cell projection. The protein resides in the dendrite. Its subcellular location is the cilium membrane. It is found in the dendritic spine. Dopamine receptor whose activity is mediated by G proteins which activate adenylyl cyclase. In Rattus norvegicus (Rat), this protein is D(1A) dopamine receptor (Drd1).